A 120-amino-acid polypeptide reads, in one-letter code: Flagellar protein FliT (120 aa).

The tract at residues 1–50 (MERHQHLLSEYQQILTLSEQMLMLATVENWNTLVDLEMTYLKAVENTANI) is required for homodimerization. The fliD binding stretch occupies residues 60-98 (LQELLRQKLRSILENEIEIKRLLQRRLDKLSELVGQSTR).

Belongs to the FliT family. Homodimer. Interacts with FliD and FlhC.

It is found in the cytoplasm. The protein localises to the cytosol. Dual-function protein that regulates the transcription of class 2 flagellar operons and that also acts as an export chaperone for the filament-capping protein FliD. As a transcriptional regulator, acts as an anti-FlhDC factor; it directly binds FlhC, thus inhibiting the binding of the FlhC/FlhD complex to class 2 promoters, resulting in decreased expression of class 2 flagellar operons. As a chaperone, effects FliD transition to the membrane by preventing its premature polymerization, and by directing it to the export apparatus. This Yersinia pestis (strain Pestoides F) protein is Flagellar protein FliT.